Consider the following 544-residue polypeptide: Membrane protein insertase YidC (544 aa).

5 helical membrane-spanning segments follow: residues 13–33 (LSLF…SNIL), 343–363 (WGLS…PLTF), 409–429 (LGGC…YSLV), 461–481 (LYFV…FTQL), and 506–526 (MPIM…IYWI).

This sequence belongs to the OXA1/ALB3/YidC family. Type 1 subfamily. Interacts with the Sec translocase complex via SecD. Specifically interacts with transmembrane segments of nascent integral membrane proteins during membrane integration.

Its subcellular location is the cell inner membrane. In terms of biological role, required for the insertion and/or proper folding and/or complex formation of integral membrane proteins into the membrane. Involved in integration of membrane proteins that insert both dependently and independently of the Sec translocase complex, as well as at least some lipoproteins. Aids folding of multispanning membrane proteins. This is Membrane protein insertase YidC from Borreliella burgdorferi (strain ATCC 35210 / DSM 4680 / CIP 102532 / B31) (Borrelia burgdorferi).